Reading from the N-terminus, the 546-residue chain is Chaperonin GroEL (546 aa).

ATP-binding positions include 30–33, Lys-51, 87–91, Gly-415, 479–481, and Asp-495; these read TLGP, DGTTT, and NAA. The disordered stretch occupies residues 527–546; that stretch reads DKPAAPPMPGGMGGMGGMDF. Positions 536–546 are enriched in gly residues; sequence GGMGGMGGMDF.

Belongs to the chaperonin (HSP60) family. As to quaternary structure, forms a cylinder of 14 subunits composed of two heptameric rings stacked back-to-back. Interacts with the co-chaperonin GroES.

It is found in the cytoplasm. The catalysed reaction is ATP + H2O + a folded polypeptide = ADP + phosphate + an unfolded polypeptide.. Together with its co-chaperonin GroES, plays an essential role in assisting protein folding. The GroEL-GroES system forms a nano-cage that allows encapsulation of the non-native substrate proteins and provides a physical environment optimized to promote and accelerate protein folding. This chain is Chaperonin GroEL, found in Bordetella petrii (strain ATCC BAA-461 / DSM 12804 / CCUG 43448).